Here is a 274-residue protein sequence, read N- to C-terminus: Nitrogenase iron protein (274 aa).

Residue 8 to 15 coordinates ATP; it reads GKGGIGKS. Cys-94 contacts [4Fe-4S] cluster. Arg-97 is modified (ADP-ribosylarginine; by dinitrogenase reductase ADP-ribosyltransferase). Cys-131 contributes to the [4Fe-4S] cluster binding site.

Belongs to the NifH/BchL/ChlL family. Homodimer. Requires [4Fe-4S] cluster as cofactor. The reversible ADP-ribosylation of Arg-97 inactivates the nitrogenase reductase and regulates nitrogenase activity.

It catalyses the reaction N2 + 8 reduced [2Fe-2S]-[ferredoxin] + 16 ATP + 16 H2O = H2 + 8 oxidized [2Fe-2S]-[ferredoxin] + 2 NH4(+) + 16 ADP + 16 phosphate + 6 H(+). Its function is as follows. The key enzymatic reactions in nitrogen fixation are catalyzed by the nitrogenase complex, which has 2 components: the iron protein and the molybdenum-iron protein. This is Nitrogenase iron protein from Chlorobium limicola (strain DSM 245 / NBRC 103803 / 6330).